The primary structure comprises 351 residues: Dihydroorotate dehydrogenase (quinone) (351 aa).

FMN contacts are provided by residues A61–K65 and T85. K65 provides a ligand contact to substrate. N110–F114 lines the substrate pocket. 2 residues coordinate FMN: N139 and N172. N172 contributes to the substrate binding site. S175 acts as the Nucleophile in catalysis. N177 lines the substrate pocket. Residues K217 and T245 each contribute to the FMN site. N246–T247 contributes to the substrate binding site. Residues G268, G297, and Y318–T319 each bind FMN.

This sequence belongs to the dihydroorotate dehydrogenase family. Type 2 subfamily. Monomer. The cofactor is FMN.

It localises to the cell membrane. The catalysed reaction is (S)-dihydroorotate + a quinone = orotate + a quinol. It participates in pyrimidine metabolism; UMP biosynthesis via de novo pathway; orotate from (S)-dihydroorotate (quinone route): step 1/1. Functionally, catalyzes the conversion of dihydroorotate to orotate with quinone as electron acceptor. The chain is Dihydroorotate dehydrogenase (quinone) from Xylella fastidiosa (strain 9a5c).